A 1248-amino-acid chain; its full sequence is Kinesin-like protein KIN-14I (1248 aa).

The MyTH4 domain maps to 88–244 (FQKDPIPTSL…PAREEIEALL (157 aa)). Residues 249-563 (LTTIVFFLDE…HINDVMLRRY (315 aa)) enclose the FERM domain. Residues 586–659 (NIEIYEKRVQ…LDKLKSLCDE (74 aa)) are a coiled coil. The disordered stretch occupies residues 675-704 (ETRLKSGQGQESSNRTGVSGNHFERDTLPT). The segment covering 679–693 (KSGQGQESSNRTGVS) has biased composition (polar residues). Residues 708-799 (VNNSIEMLAK…TRSLNVTEST (92 aa)) are a coiled coil. Residues 872-1193 (KIRVFCRLRP…LMYASRVRCI (322 aa)) enclose the Kinesin motor domain. 953 to 960 (GQTGSGKT) is a binding site for ATP. Residues 1201 to 1223 (VAPKEIMRLKKLIAYWKEQAGKR) are calmodulin-binding. A disordered region spans residues 1220-1248 (AGKRSEDDDLEEIQEERTPKEKADNRLTS). Over residues 1234–1248 (EERTPKEKADNRLTS) the composition is skewed to basic and acidic residues.

It belongs to the TRAFAC class myosin-kinesin ATPase superfamily. Kinesin family. KIN-14 subfamily. Binds microtubules via its N-terminus containing the MyTH4 domain and binds F-actin via its FERM domain. Binding to calmodulin inhibits microtubule binding activity.

Its subcellular location is the cytoplasm. It is found in the cytoskeleton. Minus-end microtubule-dependent motor protein involved in the regulation of cell division. This is Kinesin-like protein KIN-14I from Oryza sativa subsp. japonica (Rice).